The primary structure comprises 494 residues: Zinc finger and SCAN domain-containing protein 30 (494 aa).

Residues 48–130 (RQKFRQFSYS…TMLEELEKEL (83 aa)) enclose the SCAN box domain. A Glycyl lysine isopeptide (Lys-Gly) (interchain with G-Cter in SUMO2) cross-link involves residue Lys197. 7 consecutive C2H2-type zinc fingers follow at residues 301 to 323 (YECFDCGKAFCQSSKLIRHQRIH), 329 to 351 (YACKECGKAFSLSSDLVRHQRIH), 357 to 379 (YECCECGKAFRGSSELIRHRRIH), 385 to 407 (YECGECGKAFSRSSALIQHKKIH), 413 to 435 (YECIACGKAFGRSSILIEHQRIH), 441 to 463 (YECNECGKSFNQSSALTQHQRIH), and 469 to 491 (YECSECRKTFRHRSGLMQHQRTH).

Belongs to the krueppel C2H2-type zinc-finger protein family.

The protein resides in the nucleus. Its function is as follows. May be involved in transcriptional regulation. This Homo sapiens (Human) protein is Zinc finger and SCAN domain-containing protein 30 (ZSCAN30).